The following is a 286-amino-acid chain: Putative 2-aminoethylphosphonate transport system permease protein PhnU (286 aa).

6 consecutive transmembrane segments (helical) span residues 19-39 (WLLLPLLVLATLFFWPLSLIV), 76-96 (FFATAGCLLLGSAMSLILVFI), 111-131 (FIALPTFLITLAFTFIYGSAG), 150-170 (FLYSMQGVILAEITVFTPLVM), 202-222 (VIFPAALPALMAGGSLCLLLT), and 254-274 (YTVACMIALINIVLSLGLFSL). One can recognise an ABC transmembrane type-1 domain in the interval 68–275 (LLNTLQIAFF…VLSLGLFSLY (208 aa)).

This sequence belongs to the binding-protein-dependent transport system permease family.

The protein resides in the cell inner membrane. Probably part of the PhnSTUV complex (TC 3.A.1.11.5) involved in 2-aminoethylphosphonate import. Probably responsible for the translocation of the substrate across the membrane. This is Putative 2-aminoethylphosphonate transport system permease protein PhnU (phnU) from Salmonella choleraesuis (strain SC-B67).